The chain runs to 526 residues: Glucose-6-phosphate isomerase (526 aa).

The active-site Proton donor is Glu320. Residues His349 and Lys453 contribute to the active site.

It belongs to the GPI family.

Its subcellular location is the cytoplasm. The enzyme catalyses alpha-D-glucose 6-phosphate = beta-D-fructose 6-phosphate. The protein operates within carbohydrate biosynthesis; gluconeogenesis. Its pathway is carbohydrate degradation; glycolysis; D-glyceraldehyde 3-phosphate and glycerone phosphate from D-glucose: step 2/4. Catalyzes the reversible isomerization of glucose-6-phosphate to fructose-6-phosphate. The sequence is that of Glucose-6-phosphate isomerase from Rippkaea orientalis (strain PCC 8801 / RF-1) (Cyanothece sp. (strain PCC 8801)).